The sequence spans 375 residues: Alpha-2,8-sialyltransferase 8B (375 aa).

The Cytoplasmic segment spans residues 1–6; the sequence is MQLQFR. The helical; Signal-anchor for type II membrane protein transmembrane segment at 7-23 threads the bilayer; the sequence is SWMLAALTLLVVFLIFA. Topologically, residues 24-375 are lumenal; it reads DISEIEEEIG…LTVGQCDGAT (352 aa). Asn-60, Asn-72, Asn-89, and Asn-134 each carry an N-linked (GlcNAc...) asparagine glycan. Disulfide bonds link Cys-157–Cys-307 and Cys-171–Cys-371. Residues Asn-162 and Asn-185 each coordinate CMP-N-acetyl-beta-neuraminate. Residues Asn-219 and Asn-234 are each glycosylated (N-linked (GlcNAc...) asparagine). Thr-294, Thr-295, Gly-296, Trp-316, Tyr-329, and His-330 together coordinate CMP-N-acetyl-beta-neuraminate. Residue His-346 is the Proton donor/acceptor of the active site.

The protein belongs to the glycosyltransferase 29 family. In terms of processing, autopolysialylated. Autopolysialylation is not a prerequisite for the polysialylation acitity, but enhances the polysialylation acitity.

It localises to the golgi apparatus membrane. The protein resides in the secreted. The protein localises to the cell membrane. The catalysed reaction is [N-acetyl-alpha-D-neuraminosyl-(2-&gt;8)](n) + CMP-N-acetyl-beta-neuraminate = [N-acetyl-alpha-D-neuraminosyl-(2-&gt;8)](n+1) + CMP + H(+). It participates in protein modification; protein glycosylation. Catalyzes the transfer of a sialic acid from a CMP-linked sialic acid donor onto a terminal alpha-2,3-, alpha-2,6-, or alpha-2,8-linked sialic acid of an N-linked glycan acceptor through alpha-2,8-linkages. Therefore, participates in polysialic acid synthesis on various sialylated N-acetyllactosaminyl oligosaccharides (alpha-2,3-, alpha-2,6-, or alpha-2,8-linked sialic acid), including NCAM1, NCAM1 N-glycans, FETUB N-glycans, and to a lesser extent sialylparagloboside (SPG) and AHSG, which does not require the initial addition of an alpha 2,8-sialic acid. However, does not exhibit sialic acid-polymerase activity. Catalyzes polysialic acid synthesis in the hippocampal on NCAM1 and supports neurite outgrowth. ST8SIA2-mediated polysialylation influences on oligodendrocyte differentiation and may promote the integrity of myelin and axons. This Pan troglodytes (Chimpanzee) protein is Alpha-2,8-sialyltransferase 8B.